Reading from the N-terminus, the 470-residue chain is Uronate isomerase (470 aa).

It belongs to the metallo-dependent hydrolases superfamily. Uronate isomerase family.

The catalysed reaction is D-glucuronate = D-fructuronate. The enzyme catalyses aldehydo-D-galacturonate = keto-D-tagaturonate. The protein operates within carbohydrate metabolism; pentose and glucuronate interconversion. The chain is Uronate isomerase from Klebsiella pneumoniae (strain 342).